The primary structure comprises 391 residues: Ferrochelatase (391 aa).

2 residues coordinate Fe cation: His196 and Glu281.

This sequence belongs to the ferrochelatase family.

The protein localises to the cytoplasm. The catalysed reaction is heme b + 2 H(+) = protoporphyrin IX + Fe(2+). The protein operates within porphyrin-containing compound metabolism; protoheme biosynthesis; protoheme from protoporphyrin-IX: step 1/1. Catalyzes the ferrous insertion into protoporphyrin IX. This is Ferrochelatase from Prochlorococcus marinus (strain SARG / CCMP1375 / SS120).